The sequence spans 683 residues: DNA-directed RNA polymerase subunit beta' (683 aa).

Positions 69, 71, 87, and 90 each coordinate Zn(2+). The Mg(2+) site is built by Asp-489, Asp-491, and Asp-493.

This sequence belongs to the RNA polymerase beta' chain family. RpoC1 subfamily. As to quaternary structure, in plastids the minimal PEP RNA polymerase catalytic core is composed of four subunits: alpha, beta, beta', and beta''. When a (nuclear-encoded) sigma factor is associated with the core the holoenzyme is formed, which can initiate transcription. Mg(2+) serves as cofactor. It depends on Zn(2+) as a cofactor.

It localises to the plastid. Its subcellular location is the chloroplast. It catalyses the reaction RNA(n) + a ribonucleoside 5'-triphosphate = RNA(n+1) + diphosphate. Its function is as follows. DNA-dependent RNA polymerase catalyzes the transcription of DNA into RNA using the four ribonucleoside triphosphates as substrates. The protein is DNA-directed RNA polymerase subunit beta' of Sorghum bicolor (Sorghum).